We begin with the raw amino-acid sequence, 201 residues long: Recombination protein RecR (201 aa).

The segment at 57–74 adopts a C4-type zinc-finger fold; the sequence is CSICGNITATDTDPCVIC. The region spanning 82-178 is the Toprim domain; the sequence is STVFVVENSR…AVTRLAHGLA (97 aa).

The protein belongs to the RecR family.

Functionally, may play a role in DNA repair. It seems to be involved in an RecBC-independent recombinational process of DNA repair. It may act with RecF and RecO. This is Recombination protein RecR from Leuconostoc mesenteroides subsp. mesenteroides (strain ATCC 8293 / DSM 20343 / BCRC 11652 / CCM 1803 / JCM 6124 / NCDO 523 / NBRC 100496 / NCIMB 8023 / NCTC 12954 / NRRL B-1118 / 37Y).